Here is a 2671-residue protein sequence, read N- to C-terminus: Stalled ribosome sensor GCN1 (2671 aa).

Alanine 2 is modified (N-acetylalanine). HEAT repeat units follow at residues 140–178 (NKLV…ENPG), 257–293 (EFKD…LDLS), 294–331 (QYAM…QCSD), 385–423 (IVAE…EVPK), 425–459 (LTEW…GDTL), 460–503 (LQAL…SVAD), 560–597 (NKVQ…SLGG), 599–636 (KLAH…AGKA), 697–732 (DPEA…SLSV), and 733–770 (LSPD…QTPA). A Phosphoserine modification is found at serine 729. The residue at position 786 (serine 786) is a Phosphoserine. Residues 804–863 (QIIELELKEEIKKKKGIKEEVQLTSKQKEMLQAQLDREAQVRRRLQELDGELEAALGLLD) adopt a coiled-coil conformation. 36 HEAT repeats span residues 879-925 (VLVD…HVTL), 979-1016 (SLVF…QAQL), 1035-1072 (LPRV…SSSG), 1078-1115 (FAEQ…VLPA), 1155-1192 (DLQP…RYQR), 1210-1250 (YRPP…YLDS), 1251-1289 (SQVK…THGK), 1290-1332 (ENVN…HLDK), 1335-1372 (PKVK…AIKE), 1374-1410 (AGGM…GLGI), 1413-1451 (LKQQ…MLGK), 1455-1492 (PYVV…NLSA), 1493-1530 (HGVK…CAPK), 1534-1571 (SCLP…VIRN), 1573-1609 (EILA…HFID), 1611-1648 (PSLA…LTDQ), 1653-1690 (PYLP…GMGE), 1692-1729 (CFED…GLGV), 1731-1769 (KLEK…TFGD), 1773-1810 (PYVG…MYAE), 1812-1848 (AIAL…HISG), 1921-1958 (EILP…KLGE), 1959-1996 (KILP…STSR), 2001-2038 (YFSE…TIGH), 2039-2076 (QALE…SRVV), 2078-2106 (PYLV…DALT), 2107-2146 (RHLG…VEDD), 2147-2184 (TGHR…RSKA), 2188-2225 (SHLR…KLDA), 2259-2296 (KGVT…LTSA), 2301-2338 (PSVV…AKVG), 2339-2380 (IALK…IHIK), 2382-2417 (DPLF…GAGA), 2422-2459 (VIRK…FLTE), 2546-2583 (QLPA…DPLP), and 2588-2625 (QAIK…MRQG). Positions 2260–2408 (GVTSILPVLR…GVRDTMLQAL (149 aa)) are RWDBD region. Position 2276 is a phosphoserine (serine 2276). One copy of the HEAT 47; degenerate repeat lies at 2627–2661 (EVFQSLSKILDVASLEVLNEVNRRSLKKLASQADS).

Belongs to the GCN1 family. In terms of assembly, interacts with EIF2AK4/GCN2; this interaction stimulates the EIF2AK4/GCN2 kinase activity and is impaired by IMPACT upon a variety of stress conditions, such as amino acid depletion, UV-C irradiation, proteasome inhibitor treatment and glucose deprivation. Interacts with IMPACT; this prevents the interaction of GCN1 with EIF2AK4/GCN2 and inhibits EIF2AK4/GCN2 kinase activity. Interacts with RNF14; interaction takes place following ribosome stalling and promotes recruitment of RNF14. As to expression, ubiquitously expressed. Expressed in skeletal muscules, ovary and testis.

The protein resides in the cytoplasm. Its function is as follows. Ribosome collision sensor that plays a key role in the RNF14-RNF25 translation quality control pathway, a pathway that takes place when a ribosome has stalled during translation, and which promotes ubiquitination and degradation of translation factors on stalled ribosomes. Directly binds to the ribosome and acts as a sentinel for colliding ribosomes: activated following ribosome stalling and promotes recruitment of RNF14, which directly ubiquitinates EEF1A1/eEF1A, leading to its degradation. In addition to EEF1A1/eEF1A, the RNF14-RNF25 translation quality control pathway mediates degradation of ETF1/eRF1 and ubiquitination of ribosomal protein. GCN1 also acts as a positive activator of the integrated stress response (ISR) by mediating activation of EIF2AK4/GCN2 in response to amino acid starvation. Interaction with EIF2AK4/GCN2 on translating ribosomes stimulates EIF2AK4/GCN2 kinase activity, leading to phosphorylation of eukaryotic translation initiation factor 2 (eIF-2-alpha/EIF2S1). EIF2S1/eIF-2-alpha phosphorylation converts EIF2S1/eIF-2-alpha into a global protein synthesis inhibitor, leading to a global attenuation of cap-dependent translation, and thus to a reduced overall utilization of amino acids, while concomitantly initiating the preferential translation of ISR-specific mRNAs, such as the transcriptional activator ATF4, and hence allowing ATF4-mediated reprogramming of amino acid biosynthetic gene expression to alleviate nutrient depletion. The protein is Stalled ribosome sensor GCN1 of Homo sapiens (Human).